A 237-amino-acid chain; its full sequence is uncharacterized protein (237 aa).

One can recognise a Response regulatory domain in the interval S3–L116. 4-aspartylphosphate is present on D54. The 102-residue stretch at I135–F236 folds into the HTH LytTR-type domain.

This is an uncharacterized protein from Vibrio cholerae serotype O1 (strain ATCC 39315 / El Tor Inaba N16961).